The primary structure comprises 486 residues: Cardiolipin synthase A (486 aa).

Transmembrane regions (helical) follow at residues 3–23 and 38–58; these read TFYT…IAGV and MAWL…YLSV. 2 PLD phosphodiesterase domains span residues 219 to 246 and 399 to 426; these read MDLR…VDPR and EGGL…DMRS. Catalysis depends on residues His-224, Lys-226, Asp-231, His-404, Lys-406, and Asp-411.

It belongs to the phospholipase D family. Cardiolipin synthase subfamily. ClsA sub-subfamily.

Its subcellular location is the cell inner membrane. It catalyses the reaction 2 a 1,2-diacyl-sn-glycero-3-phospho-(1'-sn-glycerol) = a cardiolipin + glycerol. Its function is as follows. Catalyzes the reversible phosphatidyl group transfer from one phosphatidylglycerol molecule to another to form cardiolipin (CL) (diphosphatidylglycerol) and glycerol. The polypeptide is Cardiolipin synthase A (Salmonella choleraesuis (strain SC-B67)).